Here is a 613-residue protein sequence, read N- to C-terminus: Dihydroxy-acid dehydratase (613 aa).

A Mg(2+)-binding site is contributed by aspartate 81. Cysteine 122 contacts [2Fe-2S] cluster. Residues aspartate 123 and lysine 124 each contribute to the Mg(2+) site. The residue at position 124 (lysine 124) is an N6-carboxylysine. A [2Fe-2S] cluster-binding site is contributed by cysteine 193. Residue glutamate 489 coordinates Mg(2+). The active-site Proton acceptor is the serine 515.

The protein belongs to the IlvD/Edd family. In terms of assembly, homodimer. The cofactor is [2Fe-2S] cluster. Mg(2+) serves as cofactor.

The enzyme catalyses (2R)-2,3-dihydroxy-3-methylbutanoate = 3-methyl-2-oxobutanoate + H2O. It catalyses the reaction (2R,3R)-2,3-dihydroxy-3-methylpentanoate = (S)-3-methyl-2-oxopentanoate + H2O. Its pathway is amino-acid biosynthesis; L-isoleucine biosynthesis; L-isoleucine from 2-oxobutanoate: step 3/4. It participates in amino-acid biosynthesis; L-valine biosynthesis; L-valine from pyruvate: step 3/4. Functionally, functions in the biosynthesis of branched-chain amino acids. Catalyzes the dehydration of (2R,3R)-2,3-dihydroxy-3-methylpentanoate (2,3-dihydroxy-3-methylvalerate) into 2-oxo-3-methylpentanoate (2-oxo-3-methylvalerate) and of (2R)-2,3-dihydroxy-3-methylbutanoate (2,3-dihydroxyisovalerate) into 2-oxo-3-methylbutanoate (2-oxoisovalerate), the penultimate precursor to L-isoleucine and L-valine, respectively. This is Dihydroxy-acid dehydratase from Pseudomonas putida (strain ATCC 700007 / DSM 6899 / JCM 31910 / BCRC 17059 / LMG 24140 / F1).